Reading from the N-terminus, the 317-residue chain is Tyrosine--tRNA ligase (317 aa).

Residue tyrosine 33 participates in L-tyrosine binding. The 'HIGH' region signature appears at 38–46 (PSGKIHMGH). Tyrosine 155, glutamine 159, aspartate 162, and glutamine 177 together coordinate L-tyrosine. Residues 211-215 (KMSSS) carry the 'KMSKS' region motif. Residue serine 214 participates in ATP binding.

The protein belongs to the class-I aminoacyl-tRNA synthetase family. TyrS type 3 subfamily. In terms of assembly, homodimer.

The protein resides in the cytoplasm. The enzyme catalyses tRNA(Tyr) + L-tyrosine + ATP = L-tyrosyl-tRNA(Tyr) + AMP + diphosphate + H(+). Its function is as follows. Catalyzes the attachment of tyrosine to tRNA(Tyr) in a two-step reaction: tyrosine is first activated by ATP to form Tyr-AMP and then transferred to the acceptor end of tRNA(Tyr). The sequence is that of Tyrosine--tRNA ligase from Methanococcoides burtonii (strain DSM 6242 / NBRC 107633 / OCM 468 / ACE-M).